Here is a 221-residue protein sequence, read N- to C-terminus: Response regulator protein PmrA (221 aa).

One can recognise a Response regulatory domain in the interval 2-116; sequence RILLAEDDLL…ELQARVRALT (115 aa). Position 51 is a 4-aspartylphosphate (aspartate 51). Residues 124–218 constitute a DNA-binding region (ompR/PhoB-type); sequence LPQLVHGELR…VRGIGYGIDQ (95 aa).

It is found in the cytoplasm. In terms of biological role, member of the two-component regulatory system PmrA/PmrB that plays a role in the regulation of resistance towards polymyxin B and cationic antimicrobial peptides in response to limiting concentrations of Mg(2+). Functions as a transcriptional activator by direct binding to a cis-acting sequence upstream of the target gene promoters including lipase lipA and pmrH promoters. Also autoregulates its own pmrAB operon under Mg(2+)-limiting conditions. The polypeptide is Response regulator protein PmrA (pmrA) (Pseudomonas aeruginosa (strain ATCC 15692 / DSM 22644 / CIP 104116 / JCM 14847 / LMG 12228 / 1C / PRS 101 / PAO1)).